A 285-amino-acid polypeptide reads, in one-letter code: Putative lipoprotein SCO4650 (285 aa).

An N-terminal signal peptide occupies residues 1 to 20 (MTGTTARRTVVSVAVSAALA). The N-palmitoyl cysteine moiety is linked to residue C21. C21 carries S-diacylglycerol cysteine lipidation. Positions 27 to 63 (GPGGSDDAGHSTGPTGSARPSASAPASSRAPALTGPS) are disordered. Positions 43-58 (SARPSASAPASSRAPA) are enriched in low complexity.

It localises to the cell membrane. The polypeptide is Putative lipoprotein SCO4650 (Streptomyces coelicolor (strain ATCC BAA-471 / A3(2) / M145)).